The primary structure comprises 147 residues: MADHDLVLKCWGAVEADYAANGGEVLNRLFKEYPDTLKLFPKFSGISQGDLAGSPAVAAHGATVLKKLGELLKAKGDHAALLKPLANTHANIHKVALNNFRLITEVLVKVMAEKAGLDAAGQGALRRVMDAVIGDIDGYYKEIGFAG.

The Globin domain maps to 2-141 (ADHDLVLKCW…VIGDIDGYYK (140 aa)). His-60 is a binding site for nitrite. Position 60 (His-60) interacts with O2. His-89 serves as a coordination point for heme b.

The protein belongs to the globin family. In terms of assembly, monomeric.

Its subcellular location is the cytoplasm. It localises to the sarcoplasm. The enzyme catalyses Fe(III)-heme b-[protein] + nitric oxide + H2O = Fe(II)-heme b-[protein] + nitrite + 2 H(+). It carries out the reaction H2O2 + AH2 = A + 2 H2O. Its function is as follows. Monomeric heme protein which primary function is to store oxygen and facilitate its diffusion within muscle tissues. Reversibly binds oxygen through a pentacoordinated heme iron and enables its timely and efficient release as needed during periods of heightened demand. Depending on the oxidative conditions of tissues and cells, and in addition to its ability to bind oxygen, it also has a nitrite reductase activity whereby it regulates the production of bioactive nitric oxide. Under stress conditions, like hypoxia and anoxia, it also protects cells against reactive oxygen species thanks to its pseudoperoxidase activity. The polypeptide is Myoglobin (mb) (Danio rerio (Zebrafish)).